Reading from the N-terminus, the 123-residue chain is MTDQTSLQYTAEHEWVLIDGDVATVGITSYAADKLGDVVFVELPAVGDELAGGSVVGEIESTKSVGELFAPIDGTVTEVNDDVVASPDLVNSDPFGAGWLVKVRFEALPTLLSHDEYVALVGE.

Residues 22–104 (VATVGITSYA…FGAGWLVKVR (83 aa)) enclose the Lipoyl-binding domain. The residue at position 63 (lysine 63) is an N6-lipoyllysine.

The protein belongs to the GcvH family. In terms of assembly, the glycine cleavage system is composed of four proteins: P, T, L and H. (R)-lipoate is required as a cofactor.

In terms of biological role, the glycine cleavage system catalyzes the degradation of glycine. The H protein shuttles the methylamine group of glycine from the P protein to the T protein. This Clavibacter sepedonicus (Clavibacter michiganensis subsp. sepedonicus) protein is Glycine cleavage system H protein.